The following is a 504-amino-acid chain: Sperm motility kinase 2A (504 aa).

One can recognise a Protein kinase domain in the interval 28-276; sequence YEMLGTIGHG…VAEVMMHPWV (249 aa). Residues 34–42 and lysine 57 contribute to the ATP site; that span reads IGHGGSTKV. Aspartate 147 (proton acceptor) is an active-site residue. One can recognise a UBA domain in the interval 294–334; that stretch reads KPDPAIVKAMGHIGFQAQDIEDSLRQRKFNETMASYCLLKK. 2 stretches are compositionally biased toward polar residues: residues 376 to 393 and 443 to 454; these read PTSL…CGRS and SDESTEGHTSAS. 2 disordered regions span residues 376–403 and 443–469; these read PTSL…RSFS and SDES…PRGI.

Belongs to the protein kinase superfamily. CAMK Ser/Thr protein kinase family. Smok subfamily. In terms of tissue distribution, testis-specific. Expressed in the testis from 22 days postpartum (22 dpp).

The catalysed reaction is L-seryl-[protein] + ATP = O-phospho-L-seryl-[protein] + ADP + H(+). It catalyses the reaction L-threonyl-[protein] + ATP = O-phospho-L-threonyl-[protein] + ADP + H(+). Functionally, may play a role in sperm motility, especially in the regulation of flagellar function. The sequence is that of Sperm motility kinase 2A (Smok2a) from Mus musculus (Mouse).